Reading from the N-terminus, the 1613-residue chain is Vitellogenin-2 (1613 aa).

A signal peptide spans 1–15 (MRSIIIASLVALALA). A Vitellogenin domain is found at 24–687 (FEPKTDYHYK…EKNSFLPKDL (664 aa)). A glycan (N-linked (GlcNAc...) asparagine) is linked at Asn-1268. The 170-residue stretch at 1308–1477 (SVCKVQKNQI…SYLLKNEECE (170 aa)) folds into the VWFD domain. Cystine bridges form between Cys-1310-Cys-1440 and Cys-1332-Cys-1476. The segment at 1491 to 1531 (KYERDEEQSDEYSSEETYDYEQENTKKSQKNQRSQKKSDLV) is disordered. A compositionally biased stretch (acidic residues) spans 1495-1512 (DEEQSDEYSSEETYDYEQ).

In terms of tissue distribution, expressed in the intestine of adult hermaphrodites.

The protein localises to the secreted. Precursor of the egg-yolk proteins that are sources of nutrients during embryonic development. Together with other vitellogenins, may play a role in modulating life-span, acting via induction of autophagy and lysosomal lipolysis. In Caenorhabditis elegans, this protein is Vitellogenin-2 (vit-2).